Reading from the N-terminus, the 257-residue chain is Adenosylcobinamide-GDP ribazoletransferase (257 aa).

Transmembrane regions (helical) follow at residues 7 to 27 (QLTLFFIAMGFFTRIPMPTWV), 39 to 59 (RYFGLIGLLVGGICALVYEIT), 61 to 81 (GFLPVSVSIIFAMIAGLVVTG), 113 to 133 (IGTYGALALVMGLMLKFILLS), 143 to 163 (VVTALIVGHTLSRVMAASLIF), and 196 to 216 (VLVLWCSGLSGGLYIAIGLVL).

Belongs to the CobS family. The cofactor is Mg(2+).

It localises to the cell inner membrane. It catalyses the reaction alpha-ribazole + adenosylcob(III)inamide-GDP = adenosylcob(III)alamin + GMP + H(+). The enzyme catalyses alpha-ribazole 5'-phosphate + adenosylcob(III)inamide-GDP = adenosylcob(III)alamin 5'-phosphate + GMP + H(+). Its pathway is cofactor biosynthesis; adenosylcobalamin biosynthesis; adenosylcobalamin from cob(II)yrinate a,c-diamide: step 7/7. Joins adenosylcobinamide-GDP and alpha-ribazole to generate adenosylcobalamin (Ado-cobalamin). Also synthesizes adenosylcobalamin 5'-phosphate from adenosylcobinamide-GDP and alpha-ribazole 5'-phosphate. This Shewanella woodyi (strain ATCC 51908 / MS32) protein is Adenosylcobinamide-GDP ribazoletransferase.